A 318-amino-acid polypeptide reads, in one-letter code: 2-keto-3-deoxygluconate permease (318 aa).

The next 10 membrane-spanning stretches (helical) occupy residues 10-30 (LPGG…TLWP), 42-62 (GLIS…GATI), 82-102 (IAMA…GGVP), 109-129 (LSVL…YAAL), 139-159 (AGAV…LILG), 163-183 (LASF…LGFA), 194-214 (FFAQ…GNTL), 224-244 (ASGV…LLLA), 257-277 (VAAS…AGMA), and 289-309 (ALVA…TALY).

This sequence belongs to the KdgT transporter family.

The protein localises to the cell inner membrane. It carries out the reaction 2-dehydro-3-deoxy-D-gluconate(in) + H(+)(in) = 2-dehydro-3-deoxy-D-gluconate(out) + H(+)(out). Its function is as follows. Catalyzes the proton-dependent uptake of 2-keto-3-deoxygluconate (KDG) into the cell. This chain is 2-keto-3-deoxygluconate permease, found in Xanthomonas euvesicatoria pv. vesicatoria (strain 85-10) (Xanthomonas campestris pv. vesicatoria).